We begin with the raw amino-acid sequence, 262 residues long: 3-methyl-2-oxobutanoate hydroxymethyltransferase (262 aa).

Mg(2+) is bound by residues Asp-44 and Asp-83. 3-methyl-2-oxobutanoate-binding positions include Asp-44 to Ser-45, Asp-83, and Lys-112. A Mg(2+)-binding site is contributed by Glu-114. Glu-181 serves as the catalytic Proton acceptor.

This sequence belongs to the PanB family. Homodecamer; pentamer of dimers. Requires Mg(2+) as cofactor.

It localises to the cytoplasm. It carries out the reaction 3-methyl-2-oxobutanoate + (6R)-5,10-methylene-5,6,7,8-tetrahydrofolate + H2O = 2-dehydropantoate + (6S)-5,6,7,8-tetrahydrofolate. The protein operates within cofactor biosynthesis; (R)-pantothenate biosynthesis; (R)-pantoate from 3-methyl-2-oxobutanoate: step 1/2. Catalyzes the reversible reaction in which hydroxymethyl group from 5,10-methylenetetrahydrofolate is transferred onto alpha-ketoisovalerate to form ketopantoate. The chain is 3-methyl-2-oxobutanoate hydroxymethyltransferase from Thiobacillus denitrificans (strain ATCC 25259 / T1).